The following is a 242-amino-acid chain: uncharacterized protein (242 aa).

3 helical membrane passes run 75–95 (YAIFHIFLPFILTLLLYHNFY), 116–136 (IVLIFTYVMTVIIVYFSFSLI), and 176–196 (IQGLAHIILSLLLFILGLEVI). The disordered stretch occupies residues 204-242 (DVEMSSMRGQAITTEPASDNTMAEGTDCNTSKDVESGSS). A compositionally biased stretch (polar residues) spans 210 to 232 (MRGQAITTEPASDNTMAEGTDCN). Basic and acidic residues predominate over residues 233–242 (TSKDVESGSS).

The protein localises to the cytoplasm. Its subcellular location is the membrane. This is an uncharacterized protein from Schizosaccharomyces pombe (strain 972 / ATCC 24843) (Fission yeast).